A 751-amino-acid polypeptide reads, in one-letter code: MAKRSRSEDEDDDLQYADHDYEVPQQKGLKKLWNRVKWTRDEDDKLKKLVEQHGTDDWTLIASHLQNRSDFQCQHRWQKVLNPELIKGPWTKEEDQRVIELVQKYGPKRWSLIAKHLKGRIGKQCRERWHNHLNPEVKKSSWTEEEDRIIYEAHKRLGNRWAEIAKLLPGRTDNSIKNHWNSTMRRKVEQEGYLQDGIKSERSSSKLQHKPCATMDHLQTQNQFYIPVQIPGYQYVSPDGNCVEHVQTSAFIQQPFVDEDPDKEKKIKELELLLMSAENEVRRKRLPPQPGSFSSWSGSFLMDDSMSNTLNNLEEHTTEFYSMDENQTVSAQQNSPTKFLAVEANAVLSSLQTIPEFPRTLELIESDPVAWSDVTSFDLSDAAASPVKSTPVKLMRIQHNEGAMECQFNVSLVLEGKKNSRNGGDSEAIPLTSPNVVKFSTPPTISRKKKRIRVGQSAGSELGSASLSEVGNRRIKHTPVKTLPFSPSQFFNTCPGNEQLNIENPSFTSTPICGQKVLITTPLQKEATPKDQKENVGFRTPTIRRSILGTTPRTPTPFKNALAAQEKKYGPLKIVSQPLAFLEEDIREVLKEETGTDIFLKEEDEPAYKSCKQEHSASVKKVRKSLALESWDKEEPGTQLLTEDISDMQSENILTTSLLMIPLLEIHDNRCNLTPEKQDINSANKTYTLNKKRPNPNPCKAVKLEKSLQSNCEWETVVYGKTEDQLIMTEQARRYLSTYTATSSTSRALIL.

The segment at 1–22 (MAKRSRSEDEDDDLQYADHDYE) is disordered. HTH myb-type domains are found at residues 30–81 (KKLW…QKVL), 82–137 (NPEL…NPEV), and 138–188 (KKSS…RRKV). DNA-binding regions (H-T-H motif) lie at residues 58-81 (WTLI…QKVL), 110-133 (WSLI…HNHL), and 161-184 (WAEI…NSTM). Lys199 is covalently cross-linked (Glycyl lysine isopeptide (Lys-Gly) (interchain with G-Cter in SUMO2)). Positions 230–294 (IPGYQYVSPD…RLPPQPGSFS (65 aa)) are transcriptional activation domain. A negative regulatory domain region spans residues 297-552 (SGSFLMDDSM…IRRSILGTTP (256 aa)). Lys393 carries the N6-acetyllysine modification. Glycyl lysine isopeptide (Lys-Gly) (interchain with G-Cter in SUMO2) cross-links involve residues Lys591 and Lys601.

As to quaternary structure, component of the DREAM complex (also named LINC complex) at least composed of E2F4, E2F5, LIN9, LIN37, LIN52, LIN54, MYBL1, MYBL2, RBL1, RBL2, RBBP4, TFDP1 and TFDP2. The complex exists in quiescent cells where it represses cell cycle-dependent genes. It dissociates in S phase when LIN9, LIN37, LIN52 and LIN54 form a subcomplex that binds to MYBL2. Predominantly in the testis. Very low levels in the ovaries, spleen and brain.

The protein localises to the nucleus. Transcription factor that specifically recognizes the sequence 5'-YAAC[GT]G-3'. Acts as a master regulator of male meiosis by promoting expression of piRNAs: activates expression of both piRNA precursor RNAs and expression of protein-coding genes involved in piRNA metabolism, such as PIWIL1. The piRNA metabolic process mediates the repression of transposable elements during meiosis by forming complexes composed of piRNAs and Piwi proteins and governs the methylation and subsequent repression of transposons, which is essential for the germline integrity. Transcriptional activator of SOX30. This Mus musculus (Mouse) protein is Myb-related protein A (Mybl1).